An 85-amino-acid chain; its full sequence is MLPRSALARSLQLQRGVAARFYSEGSTGTPRGSGSEDSFVKRERATEDFFVRQREKEQLRHLKEQLEKQRKKIDSLENKIDSMTK.

The transit peptide at 1–22 directs the protein to the mitochondrion; sequence MLPRSALARSLQLQRGVAARFY. A coiled-coil region spans residues 41-84; the sequence is KRERATEDFFVRQREKEQLRHLKEQLEKQRKKIDSLENKIDSMT.

This sequence belongs to the ATPase inhibitor family. In terms of assembly, monomer and homodimer. The protein aggregates less strongly with increasing pH.

The protein resides in the mitochondrion. Its function is as follows. Endogenous ATPase inhibitor, which inhibits specifically the reverse ATPase reaction of mitochondrial F(1)F(0)-type ATP synthase. It limits ATP depletion when the mitochondrial membrane potential falls below a threshold and the F(1)F(0)-ATP synthase starts hydrolyzing ATP to pump protons out of the mitochondrial matrix. Required to avoid the consumption of cellular ATP when the F(1)F(0)-ATP synthase enzyme acts as an ATP hydrolase. Functions through inserting its N-terminal part into the catalytically active F1-ATPase, thereby blocking its rotational movement and subsequently the ATP hydrolase activity. In Saccharomyces cerevisiae (strain ATCC 204508 / S288c) (Baker's yeast), this protein is F(1)-ATPase inhibitor IF(1), mitochondrial (INH1).